A 193-amino-acid polypeptide reads, in one-letter code: Flagellar transcriptional regulator FlhC (193 aa).

Zn(2+)-binding residues include Cys137, Cys140, Cys158, and Cys161.

Belongs to the FlhC family. As to quaternary structure, heterohexamer composed of two FlhC and four FlhD subunits. Each FlhC binds a FlhD dimer, forming a heterotrimer, and a hexamer assembles by dimerization of two heterotrimers. Requires Zn(2+) as cofactor.

Its subcellular location is the cytoplasm. Its function is as follows. Functions in complex with FlhD as a master transcriptional regulator that regulates transcription of several flagellar and non-flagellar operons by binding to their promoter region. Activates expression of class 2 flagellar genes, including fliA, which is a flagellum-specific sigma factor that turns on the class 3 genes. Also regulates genes whose products function in a variety of physiological pathways. The polypeptide is Flagellar transcriptional regulator FlhC (Pectobacterium carotovorum (Erwinia carotovora)).